Here is a 117-residue protein sequence, read N- to C-terminus: Large ribosomal subunit protein uL23 (117 aa).

It belongs to the universal ribosomal protein uL23 family. In terms of assembly, part of the 50S ribosomal subunit. Contacts protein L29, and trigger factor when it is bound to the ribosome.

Its function is as follows. One of the early assembly proteins it binds 23S rRNA. One of the proteins that surrounds the polypeptide exit tunnel on the outside of the ribosome. Forms the main docking site for trigger factor binding to the ribosome. The chain is Large ribosomal subunit protein uL23 from Ruminiclostridium cellulolyticum (strain ATCC 35319 / DSM 5812 / JCM 6584 / H10) (Clostridium cellulolyticum).